Here is a 170-residue protein sequence, read N- to C-terminus: ATP synthase subunit b (170 aa).

Residues 3-23 (IKILFFLALPFLAYASEHGGT) form a helical membrane-spanning segment.

The protein belongs to the ATPase B chain family. As to quaternary structure, F-type ATPases have 2 components, F(1) - the catalytic core - and F(0) - the membrane proton channel. F(1) has five subunits: alpha(3), beta(3), gamma(1), delta(1), epsilon(1). F(0) has three main subunits: a(1), b(2) and c(10-14). The alpha and beta chains form an alternating ring which encloses part of the gamma chain. F(1) is attached to F(0) by a central stalk formed by the gamma and epsilon chains, while a peripheral stalk is formed by the delta and b chains.

Its subcellular location is the cell inner membrane. F(1)F(0) ATP synthase produces ATP from ADP in the presence of a proton or sodium gradient. F-type ATPases consist of two structural domains, F(1) containing the extramembraneous catalytic core and F(0) containing the membrane proton channel, linked together by a central stalk and a peripheral stalk. During catalysis, ATP synthesis in the catalytic domain of F(1) is coupled via a rotary mechanism of the central stalk subunits to proton translocation. Its function is as follows. Component of the F(0) channel, it forms part of the peripheral stalk, linking F(1) to F(0). The sequence is that of ATP synthase subunit b from Campylobacter concisus (strain 13826).